A 282-amino-acid chain; its full sequence is Undecaprenyl-diphosphatase (282 aa).

Helical transmembrane passes span 1 to 21, 39 to 59, 85 to 105, 115 to 135, 153 to 173, 193 to 213, 229 to 249, and 259 to 279; these read MTLI…FLPI, PGAA…MLYF, AKMG…GLLF, SLYW…LAEW, IGWK…IPGS, AARF…AFEL, NLAV…AFLL, and IFIA…GGGT.

It belongs to the UppP family.

Its subcellular location is the cell inner membrane. It catalyses the reaction di-trans,octa-cis-undecaprenyl diphosphate + H2O = di-trans,octa-cis-undecaprenyl phosphate + phosphate + H(+). In terms of biological role, catalyzes the dephosphorylation of undecaprenyl diphosphate (UPP). Confers resistance to bacitracin. The protein is Undecaprenyl-diphosphatase of Chlorobium luteolum (strain DSM 273 / BCRC 81028 / 2530) (Pelodictyon luteolum).